The chain runs to 250 residues: Global transcriptional regulator CodY (250 aa).

A GAF domain region spans residues 1 to 146; the sequence is MTLLEKTRKL…GATVVGLEIL (146 aa). The segment at residues 194–213 is a DNA-binding region (H-T-H motif); that stretch reads ASKIADKVGITRSVIVNALR.

Belongs to the CodY family.

Its subcellular location is the cytoplasm. In terms of biological role, DNA-binding global transcriptional regulator which is involved in the adaptive response to starvation and acts by directly or indirectly controlling the expression of numerous genes in response to nutrient availability. During rapid exponential growth, CodY is highly active and represses genes whose products allow adaptation to nutrient depletion. The chain is Global transcriptional regulator CodY from Caldanaerobacter subterraneus subsp. tengcongensis (strain DSM 15242 / JCM 11007 / NBRC 100824 / MB4) (Thermoanaerobacter tengcongensis).